A 38-amino-acid chain; its full sequence is Cytochrome b6-f complex subunit 5 (38 aa).

Residues 5–25 traverse the membrane as a helical segment; it reads LVLGIVLGLIPITLAGLFVAA.

It belongs to the PetG family. As to quaternary structure, the 4 large subunits of the cytochrome b6-f complex are cytochrome b6, subunit IV (17 kDa polypeptide, PetD), cytochrome f and the Rieske protein, while the 4 small subunits are PetG, PetL, PetM and PetN. The complex functions as a dimer.

It localises to the cellular thylakoid membrane. Component of the cytochrome b6-f complex, which mediates electron transfer between photosystem II (PSII) and photosystem I (PSI), cyclic electron flow around PSI, and state transitions. PetG is required for either the stability or assembly of the cytochrome b6-f complex. This Microcystis aeruginosa (strain NIES-843 / IAM M-2473) protein is Cytochrome b6-f complex subunit 5.